A 145-amino-acid chain; its full sequence is D-aminoacyl-tRNA deacylase (145 aa).

Positions 137-138 match the Gly-cisPro motif, important for rejection of L-amino acids motif; that stretch reads GP.

This sequence belongs to the DTD family. As to quaternary structure, homodimer.

Its subcellular location is the cytoplasm. It catalyses the reaction glycyl-tRNA(Ala) + H2O = tRNA(Ala) + glycine + H(+). The enzyme catalyses a D-aminoacyl-tRNA + H2O = a tRNA + a D-alpha-amino acid + H(+). An aminoacyl-tRNA editing enzyme that deacylates mischarged D-aminoacyl-tRNAs. Also deacylates mischarged glycyl-tRNA(Ala), protecting cells against glycine mischarging by AlaRS. Acts via tRNA-based rather than protein-based catalysis; rejects L-amino acids rather than detecting D-amino acids in the active site. By recycling D-aminoacyl-tRNA to D-amino acids and free tRNA molecules, this enzyme counteracts the toxicity associated with the formation of D-aminoacyl-tRNA entities in vivo and helps enforce protein L-homochirality. The protein is D-aminoacyl-tRNA deacylase of Pseudoalteromonas translucida (strain TAC 125).